The sequence spans 131 residues: Protein ApaG (131 aa).

The ApaG domain occupies 3–127; sequence RAVTRQIEVT…FSLDSPDGGK (125 aa).

The protein is Protein ApaG of Bradyrhizobium sp. (strain BTAi1 / ATCC BAA-1182).